A 110-amino-acid polypeptide reads, in one-letter code: Minor capsid protein VP2 (110 aa).

The protein belongs to the vesivirus VP2 protein family. Homooligomer. The portal-like structure consists in 12 copies of VP2. Interacts with capsid protein VP1.

The protein resides in the virion. It is found in the host cytoplasm. Minor structural protein that forms a portal-like structure at a unique three-fold axis of symmetry, following binding to the host receptor. The channel formed by VP2 may allow the delivery of the viral genome through the host endosomal membrane. The chain is Minor capsid protein VP2 from Otariidae (fur seals &amp; sea lions).